A 496-amino-acid polypeptide reads, in one-letter code: Cytochrome P450 71D181 (496 aa).

Residues 1–21 form a helical; Signal-anchor for type II membrane protein membrane-spanning segment; sequence MDISISWVAIILVISSYFIFM. Cys435 contacts heme. The segment at 471–496 is disordered; the sequence is MSETPGLSGPRKNPLIMVPTIHNPTS.

Belongs to the cytochrome P450 family. It depends on heme as a cofactor. Expressed at low levels in flowers, leaves and stems.

It localises to the membrane. It catalyses the reaction alpha-terpinene + 2 reduced [NADPH--hemoprotein reductase] + 2 O2 = carvacrol + 2 oxidized [NADPH--hemoprotein reductase] + 3 H2O + 2 H(+). The enzyme catalyses gamma-terpinene + 2 reduced [NADPH--hemoprotein reductase] + 2 O2 = carvacrol + 2 oxidized [NADPH--hemoprotein reductase] + 3 H2O + 2 H(+). It carries out the reaction (4S)-limonene + reduced [NADPH--hemoprotein reductase] + O2 = (1S,5R)-carveol + oxidized [NADPH--hemoprotein reductase] + H2O + H(+). The catalysed reaction is (4R)-limonene + reduced [NADPH--hemoprotein reductase] + O2 = (1R,5S)-carveol + oxidized [NADPH--hemoprotein reductase] + H2O + H(+). It participates in secondary metabolite biosynthesis; terpenoid biosynthesis. Its function is as follows. Involved in the biosynthesis of phenolic monoterpenes natural products thymol and carvacrol which have a broad range of biological activities acting as antimicrobial compounds, insecticides, antioxidants and pharmaceutical agents. Catalyzes the C2-hydroxylation of gamma-terpinene and alpha-terpinene to produce carvacrol. Also mediates the C6-hydroxylation of (4S)-limonene and (4R)-limonene to form carveol. The polypeptide is Cytochrome P450 71D181 (Origanum vulgare (Wild marjoram)).